Here is a 128-residue protein sequence, read N- to C-terminus: QECKCHVSGSCTLRTCWRALSDFRRTGDYLRRRMNGAVQVMATQDGANFTSARQGYRRATRTDLVYFDNSPDYCVLDKAAGSLGTAGRVCSKTSKGTDGCEIMCCGRGYDTTRVTRVTQCECKFHWCC.

Intrachain disulfides connect Cys3–Cys16 and Cys5–Cys11. Ser8 carries the O-palmitoleoyl serine; by PORCN lipid modification. Asn48 carries an N-linked (GlcNAc...) asparagine glycan. 2 cysteine pairs are disulfide-bonded: Cys90-Cys105 and Cys127-Cys128.

It belongs to the Wnt family. Palmitoleoylation is required for efficient binding to frizzled receptors. Depalmitoleoylation leads to Wnt signaling pathway inhibition.

It is found in the secreted. It localises to the extracellular space. Its subcellular location is the extracellular matrix. Functionally, ligand for members of the frizzled family of seven transmembrane receptors. Functions in the canonical Wnt/beta-catenin signaling pathway. The sequence is that of Protein Wnt-2b-B (wnt2b-b) from Xenopus laevis (African clawed frog).